Here is an 88-residue protein sequence, read N- to C-terminus: Small ribosomal subunit protein bS16 (88 aa).

This sequence belongs to the bacterial ribosomal protein bS16 family.

This Buchnera aphidicola subsp. Cinara cedri (strain Cc) protein is Small ribosomal subunit protein bS16.